The sequence spans 342 residues: S-adenosylmethionine:tRNA ribosyltransferase-isomerase (342 aa).

The protein belongs to the QueA family. In terms of assembly, monomer.

The protein localises to the cytoplasm. It carries out the reaction 7-aminomethyl-7-carbaguanosine(34) in tRNA + S-adenosyl-L-methionine = epoxyqueuosine(34) in tRNA + adenine + L-methionine + 2 H(+). It participates in tRNA modification; tRNA-queuosine biosynthesis. Transfers and isomerizes the ribose moiety from AdoMet to the 7-aminomethyl group of 7-deazaguanine (preQ1-tRNA) to give epoxyqueuosine (oQ-tRNA). The chain is S-adenosylmethionine:tRNA ribosyltransferase-isomerase from Streptococcus pyogenes serotype M2 (strain MGAS10270).